Here is a 269-residue protein sequence, read N- to C-terminus: Phosphonoacetaldehyde hydrolase (269 aa).

Catalysis depends on Asp10, which acts as the Nucleophile. Positions 10 and 12 each coordinate Mg(2+). The active-site Schiff-base intermediate with substrate is Lys52. Position 186 (Asp186) interacts with Mg(2+).

It belongs to the HAD-like hydrolase superfamily. PhnX family. Homodimer. Requires Mg(2+) as cofactor.

The enzyme catalyses phosphonoacetaldehyde + H2O = acetaldehyde + phosphate + H(+). Its function is as follows. Involved in phosphonate degradation. In Salmonella paratyphi A (strain ATCC 9150 / SARB42), this protein is Phosphonoacetaldehyde hydrolase.